The primary structure comprises 378 residues: MTIGNFRPATVLIDETAILHNIQHEVARLKKQTQLFAVVKADAYGHGMLRVARVAKAAGATGFCVAILDEALGLRKADYSEPVLVLGIVPSQYAAIAAAQTISLPVSSTEWLEQALPVLEAQPELPPLRIHLALDTGMGRIGFTEDQALKTAVAFVEAHPKQFVIEGVFTHFATADAPDDTYFKQQVDKFNHLVNLLPSRPRYVHVSNSATSLWHAACNGNMIRYGVAIYGLNPSGDAIPTTPFPLEPALSLKSELTYCKQVHAGDGISYGVTYRAKGDEFIGTVPIGYADGWLRRLQGFHVLVDGQYCEIVGRICMDQFMIRLPKAYPAGTKVVLVGQSGDQEITLLDVAKYSKTIHYEIACNLTPRLKRQSVNPVD.

The active-site Proton acceptor; specific for D-alanine is the lysine 40. Lysine 40 is subject to N6-(pyridoxal phosphate)lysine. Residue arginine 140 participates in substrate binding. The Proton acceptor; specific for L-alanine role is filled by tyrosine 270. A substrate-binding site is contributed by methionine 317.

The protein belongs to the alanine racemase family. It depends on pyridoxal 5'-phosphate as a cofactor.

It carries out the reaction L-alanine = D-alanine. The protein operates within amino-acid biosynthesis; D-alanine biosynthesis; D-alanine from L-alanine: step 1/1. Catalyzes the interconversion of L-alanine and D-alanine. May also act on other amino acids. This Lacticaseibacillus paracasei (strain ATCC 334 / BCRC 17002 / CCUG 31169 / CIP 107868 / KCTC 3260 / NRRL B-441) (Lactobacillus paracasei) protein is Alanine racemase (alr).